The sequence spans 528 residues: UDP-glucuronosyltransferase 2A2 (528 aa).

A signal peptide spans 1 to 21; the sequence is MIKKVLQLLIFHLTLAEIVLS. Residues 22-494 are Extracellular-facing; the sequence is GNVVVWPTDG…FQYHSLDVIG (473 aa). 2 N-linked (GlcNAc...) asparagine glycosylation sites follow: Asn-48 and Asn-314. The chain crosses the membrane as a helical span at residues 495-515; that stretch reads FLLACVASAILLVAKCCLFIF. Topologically, residues 516 to 528 are cytoplasmic; sequence QKVGKTGKKKKRD.

Belongs to the UDP-glycosyltransferase family.

It localises to the membrane. It carries out the reaction glucuronate acceptor + UDP-alpha-D-glucuronate = acceptor beta-D-glucuronoside + UDP + H(+). The catalysed reaction is 17alpha-estradiol + UDP-alpha-D-glucuronate = 17alpha-estradiol 3-O-(beta-D-glucuronate) + UDP + H(+). The enzyme catalyses 17beta-estradiol + UDP-alpha-D-glucuronate = 17beta-estradiol 3-O-(beta-D-glucuronate) + UDP + H(+). It catalyses the reaction chenodeoxycholate + UDP-alpha-D-glucuronate = chenodeoxycholoyl-24-O-(beta-D-glucuronate) + UDP. It carries out the reaction lithocholate + UDP-alpha-D-glucuronate = lithocholoyl-24-O-(beta-D-glucuronate) + UDP. The catalysed reaction is deoxycholate + UDP-alpha-D-glucuronate = deoxycholoyl-24-O-(beta-D-glucuronate) + UDP. The enzyme catalyses hyocholate + UDP-alpha-D-glucuronate = hyocholoyl-24-O-(beta-D-glucuronate) + UDP. It catalyses the reaction hyodeoxycholate + UDP-alpha-D-glucuronate = hyodeoxycholate 6-O-(beta-D-glucuronate) + UDP + H(+). UDP-glucuronosyltransferase (UGT) that catalyzes phase II biotransformation reactions in which lipophilic substrates are conjugated with glucuronic acid to increase the metabolite's water solubility, thereby facilitating excretion into either the urine or bile. Essential for the elimination and detoxification of drugs, xenobiotics and endogenous compounds. Catalyzes the glucuronidation of endogenous estrogen hormone estradiol. Contributes to bile acid (BA) detoxification by catalyzing the glucuronidation of BA substrates, which are natural detergents for dietary lipids absorption. Potential role in detoxification of toxic waste compounds in the amniotic fluid before birth, and air-born chemical after birth. The chain is UDP-glucuronosyltransferase 2A2 from Mus musculus (Mouse).